Here is a 402-residue protein sequence, read N- to C-terminus: Sex hormone-binding globulin (402 aa).

A signal peptide spans Met1–Ala29. Thr36 carries an O-linked (GalNAc...) threonine glycan. Laminin G-like domains lie at Val45–Cys217 and Gly224–Cys390. 2 disulfides stabilise this stretch: Cys193–Cys217 and Cys362–Cys390. Asn380 and Asn396 each carry an N-linked (GlcNAc...) asparagine glycan.

In terms of assembly, homodimer. In terms of processing, variant Asn-356 contains one N-linked (GlcNAc...) at position 356. In terms of tissue distribution, isoform 1 and isoform 2 are present in liver and testis.

It localises to the secreted. Functionally, functions as an androgen transport protein, but may also be involved in receptor mediated processes. Each dimer binds one molecule of steroid. Specific for 5-alpha-dihydrotestosterone, testosterone, and 17-beta-estradiol. Regulates the plasma metabolic clearance rate of steroid hormones by controlling their plasma concentration. This chain is Sex hormone-binding globulin, found in Homo sapiens (Human).